The following is a 399-amino-acid chain: Formate-dependent phosphoribosylglycinamide formyltransferase (399 aa).

Residues 8–9 and Glu-68 each bind N(1)-(5-phospho-beta-D-ribosyl)glycinamide; that span reads EL. ATP is bound by residues Arg-100, Lys-141, 146–151, 185–188, and Glu-193; these read SSGHGQ and EALA. In terms of domain architecture, ATP-grasp spans 105–308; the sequence is VLAHEELGLP…EFALHARAIL (204 aa). Residues Glu-266 and Glu-279 each contribute to the Mg(2+) site. Residues Asp-286, Lys-361, and 368-369 contribute to the N(1)-(5-phospho-beta-D-ribosyl)glycinamide site; that span reads RR.

The protein belongs to the PurK/PurT family. In terms of assembly, homodimer.

The enzyme catalyses N(1)-(5-phospho-beta-D-ribosyl)glycinamide + formate + ATP = N(2)-formyl-N(1)-(5-phospho-beta-D-ribosyl)glycinamide + ADP + phosphate + H(+). It participates in purine metabolism; IMP biosynthesis via de novo pathway; N(2)-formyl-N(1)-(5-phospho-D-ribosyl)glycinamide from N(1)-(5-phospho-D-ribosyl)glycinamide (formate route): step 1/1. Its function is as follows. Involved in the de novo purine biosynthesis. Catalyzes the transfer of formate to 5-phospho-ribosyl-glycinamide (GAR), producing 5-phospho-ribosyl-N-formylglycinamide (FGAR). Formate is provided by PurU via hydrolysis of 10-formyl-tetrahydrofolate. The chain is Formate-dependent phosphoribosylglycinamide formyltransferase from Bifidobacterium longum (strain NCC 2705).